The chain runs to 509 residues: Solute carrier family 2, facilitated glucose transporter member 4 (509 aa).

Topologically, residues 1-24 (MPSGFQQIGSEDGEPPQQRVTGTL) are cytoplasmic. Residues 7-13 (QIGSEDG) form an interaction with SRFBP1 region. At serine 10 the chain carries Phosphoserine. Residues 25–45 (VLAVFSAVLGSLQFGYNIGVI) form a helical membrane-spanning segment. The Extracellular portion of the chain corresponds to 46-81 (NAPQKVIEQSYNETWLGRQGPEGPSSIPPGTLTTLW). Asparagine 57 is a glycosylation site (N-linked (GlcNAc...) asparagine). Residues 82-102 (ALSVAIFSVGGMISSFLIGII) traverse the membrane as a helical segment. Residues 103 to 111 (SQWLGRKRA) lie on the Cytoplasmic side of the membrane. Residues 112–132 (MLVNNVLAVLGGSLMGLANAA) form a helical membrane-spanning segment. Over 133–142 (ASYEMLILGR) the chain is Extracellular. Residues 143–163 (FLIGAYSGLTSGLVPMYVGEI) traverse the membrane as a helical segment. Residues 164–171 (APTHLRGA) lie on the Cytoplasmic side of the membrane. The helical transmembrane segment at 172 to 192 (LGTLNQLAIVIGILIAQVLGL) threads the bilayer. Glutamine 177 contacts D-glucose. The Extracellular portion of the chain corresponds to 193-201 (ESLLGTASL). A helical membrane pass occupies residues 202–222 (WPLLLGLTVLPALLQLVLLPF). A lipid anchor (S-palmitoyl cysteine) is attached at cysteine 223. Over 223-287 (CPESPRYLYI…LLGSRTHRQP (65 aa)) the chain is Cytoplasmic. Serine 274 is modified (phosphoserine; by SGK1). A helical membrane pass occupies residues 288-308 (LIIAVVLQLSQQLSGINAVFY). Residues 298-299 (QQ) and asparagine 304 each bind D-glucose. Over 309-323 (YSTSIFETAGVGQPA) the chain is Extracellular. Residues 324-344 (YATIGAGVVNTVFTLVSVLLV) traverse the membrane as a helical segment. Asparagine 333 is a binding site for D-glucose. The Cytoplasmic portion of the chain corresponds to 345-353 (ERAGRRTLH). Residues 354 to 374 (LLGLAGMCGCAILMTVALLLL) traverse the membrane as a helical segment. The Extracellular portion of the chain corresponds to 375–384 (ERVPAMSYVS). A helical membrane pass occupies residues 385–405 (IVAIFGFVAFFEIGPGPIPWF). Residues glutamate 396 and tryptophan 404 each contribute to the D-glucose site. Residues 406–417 (IVAELFSQGPRP) are Cytoplasmic-facing. The chain crosses the membrane as a helical span at residues 418–438 (AAMAVAGFSNWTSNFIIGMGF). At 439-445 (QYVAEAM) the chain is on the extracellular side. Residues 446–466 (GPYVFLLFAVLLLGFFIFTFL) form a helical membrane-spanning segment. Over 467–509 (RVPETRGRTFDQISAAFHRTPSLLEQEVKPSTELEYLGPDEND) the chain is Cytoplasmic. Threonine 486 is modified (phosphothreonine). Serine 488 is modified (phosphoserine). The Dileucine internalization motif signature appears at 489–490 (LL).

This sequence belongs to the major facilitator superfamily. Sugar transporter (TC 2.A.1.1) family. Glucose transporter subfamily. As to quaternary structure, interacts with NDUFA9. Binds to DAXX. Interacts via its N-terminus with SRFBP1. Interacts with TRARG1; the interaction is required for proper SLC2A4 recycling after insulin stimulation. In terms of processing, sumoylated. Palmitoylated. Palmitoylation by ZDHHC7 controls the insulin-dependent translocation of GLUT4 to the plasma membrane. As to expression, skeletal and cardiac muscles; brown and white fat.

It localises to the cell membrane. The protein resides in the endomembrane system. The protein localises to the cytoplasm. Its subcellular location is the perinuclear region. It carries out the reaction D-glucose(out) = D-glucose(in). Functionally, insulin-regulated facilitative glucose transporter, which plays a key role in removal of glucose from circulation. Response to insulin is regulated by its intracellular localization: in the absence of insulin, it is efficiently retained intracellularly within storage compartments in muscle and fat cells. Upon insulin stimulation, translocates from these compartments to the cell surface where it transports glucose from the extracellular milieu into the cell. The protein is Solute carrier family 2, facilitated glucose transporter member 4 of Homo sapiens (Human).